The following is a 376-amino-acid chain: Acetylornithine aminotransferase (376 aa).

Residues 96–97 (GT) and F128 each bind pyridoxal 5'-phosphate. N(2)-acetyl-L-ornithine is bound at residue R131. 213-216 (DEVQ) serves as a coordination point for pyridoxal 5'-phosphate. K242 carries the N6-(pyridoxal phosphate)lysine modification. N(2)-acetyl-L-ornithine is bound at residue S270. T271 provides a ligand contact to pyridoxal 5'-phosphate.

Belongs to the class-III pyridoxal-phosphate-dependent aminotransferase family. ArgD subfamily. Homodimer. Pyridoxal 5'-phosphate is required as a cofactor.

The protein resides in the cytoplasm. It catalyses the reaction N(2)-acetyl-L-ornithine + 2-oxoglutarate = N-acetyl-L-glutamate 5-semialdehyde + L-glutamate. It participates in amino-acid biosynthesis; L-arginine biosynthesis; N(2)-acetyl-L-ornithine from L-glutamate: step 4/4. This is Acetylornithine aminotransferase from Aquifex aeolicus (strain VF5).